Here is a 321-residue protein sequence, read N- to C-terminus: Cytochrome c biogenesis protein CcsA (321 aa).

A run of 8 helical transmembrane segments spans residues 1-21 (MIFI…ISVV), 36-56 (LSSS…GLLI), 70-90 (LYES…ILEV), 97-117 (GLGA…TSGL), 143-163 (ILLS…FLII), 229-249 (VIGL…VWAN), 256-276 (WSWD…AIYL), and 290-310 (AIIA…VDLL).

The protein belongs to the CcmF/CycK/Ccl1/NrfE/CcsA family. May interact with Ccs1.

The protein localises to the plastid. It localises to the chloroplast thylakoid membrane. In terms of biological role, required during biogenesis of c-type cytochromes (cytochrome c6 and cytochrome f) at the step of heme attachment. This is Cytochrome c biogenesis protein CcsA from Cycas taitungensis (Prince sago).